Reading from the N-terminus, the 155-residue chain is SsrA-binding protein (155 aa).

This sequence belongs to the SmpB family.

It is found in the cytoplasm. Required for rescue of stalled ribosomes mediated by trans-translation. Binds to transfer-messenger RNA (tmRNA), required for stable association of tmRNA with ribosomes. tmRNA and SmpB together mimic tRNA shape, replacing the anticodon stem-loop with SmpB. tmRNA is encoded by the ssrA gene; the 2 termini fold to resemble tRNA(Ala) and it encodes a 'tag peptide', a short internal open reading frame. During trans-translation Ala-aminoacylated tmRNA acts like a tRNA, entering the A-site of stalled ribosomes, displacing the stalled mRNA. The ribosome then switches to translate the ORF on the tmRNA; the nascent peptide is terminated with the 'tag peptide' encoded by the tmRNA and targeted for degradation. The ribosome is freed to recommence translation, which seems to be the essential function of trans-translation. This chain is SsrA-binding protein, found in Halothermothrix orenii (strain H 168 / OCM 544 / DSM 9562).